We begin with the raw amino-acid sequence, 178 residues long: Transcription termination/antitermination protein NusG (178 aa).

The region spanning 130–159 is the KOW domain; sequence SVKVKEGPFANFIGTIEEIQLDKRKLKVHV.

It belongs to the NusG family.

Functionally, participates in transcription elongation, termination and antitermination. The polypeptide is Transcription termination/antitermination protein NusG (Halalkalibacterium halodurans (strain ATCC BAA-125 / DSM 18197 / FERM 7344 / JCM 9153 / C-125) (Bacillus halodurans)).